A 430-amino-acid polypeptide reads, in one-letter code: Adenylosuccinate synthetase (430 aa).

Residues 12 to 18 (GDEGKGK) and 40 to 42 (GHT) contribute to the GTP site. The Proton acceptor role is filled by aspartate 13. Residues aspartate 13 and glycine 40 each contribute to the Mg(2+) site. IMP contacts are provided by residues 13-16 (DEGK), 38-41 (NAGH), threonine 130, arginine 144, glutamine 224, threonine 239, and arginine 303. Histidine 41 functions as the Proton donor in the catalytic mechanism. Position 299–305 (299–305 (VNTGRKR)) interacts with substrate. GTP is bound by residues arginine 305, 331-333 (KLD), and 413-415 (STS).

The protein belongs to the adenylosuccinate synthetase family. As to quaternary structure, homodimer. Mg(2+) is required as a cofactor.

Its subcellular location is the cytoplasm. The enzyme catalyses IMP + L-aspartate + GTP = N(6)-(1,2-dicarboxyethyl)-AMP + GDP + phosphate + 2 H(+). Its pathway is purine metabolism; AMP biosynthesis via de novo pathway; AMP from IMP: step 1/2. In terms of biological role, plays an important role in the de novo pathway of purine nucleotide biosynthesis. Catalyzes the first committed step in the biosynthesis of AMP from IMP. The protein is Adenylosuccinate synthetase of Rhodopseudomonas palustris (strain TIE-1).